We begin with the raw amino-acid sequence, 434 residues long: Adenylosuccinate synthetase (434 aa).

Residues glycine 22–lysine 28 and glycine 50–threonine 52 each bind GTP. Residue aspartate 23 is the Proton acceptor of the active site. Aspartate 23 and glycine 50 together coordinate Mg(2+). IMP is bound by residues aspartate 23 to lysine 26, asparagine 48 to histidine 51, threonine 139, arginine 153, glutamine 234, threonine 249, and arginine 313. Histidine 51 serves as the catalytic Proton donor. A substrate-binding site is contributed by alanine 309 to arginine 315. GTP contacts are provided by residues arginine 315, lysine 341 to aspartate 343, and serine 423 to glycine 425.

Belongs to the adenylosuccinate synthetase family. As to quaternary structure, homodimer. It depends on Mg(2+) as a cofactor.

It localises to the cytoplasm. It carries out the reaction IMP + L-aspartate + GTP = N(6)-(1,2-dicarboxyethyl)-AMP + GDP + phosphate + 2 H(+). The protein operates within purine metabolism; AMP biosynthesis via de novo pathway; AMP from IMP: step 1/2. Plays an important role in the de novo pathway of purine nucleotide biosynthesis. Catalyzes the first committed step in the biosynthesis of AMP from IMP. The polypeptide is Adenylosuccinate synthetase (Chlorobium luteolum (strain DSM 273 / BCRC 81028 / 2530) (Pelodictyon luteolum)).